The sequence spans 577 residues: Arginine--tRNA ligase (577 aa).

The 'HIGH' region motif lies at Pro-122 to His-132.

Belongs to the class-I aminoacyl-tRNA synthetase family. As to quaternary structure, monomer.

The protein resides in the cytoplasm. The catalysed reaction is tRNA(Arg) + L-arginine + ATP = L-arginyl-tRNA(Arg) + AMP + diphosphate. The chain is Arginine--tRNA ligase from Escherichia coli O9:H4 (strain HS).